Consider the following 412-residue polypeptide: MGFITKAIPIVLAALSTVNGARILEAGPHAEAIPNKYIVVMKREVSDEAFNAHTTWLSQSLNSRIMRRAGSSKPMAGMQDKYSLGGIFRAYSGEFDDAMIKDISSHDDVDFIEPDFVVRTTTNGTNLTHQDNVPSWGLARVGSKKPGGTTYYYDPSAGKGVTAYIIDTGIDIDHEDFQGRAKWGENFVDQQNTDCNGHGTHVAGTVGGTKYGLAKGVSLVAVKVLDCDGSGSNSGVIKGMEWAMRQASGGGNGTAKAAGKSVMNMSLGGPRSEASNQAAKAISDAGIFMAVAAGNENMDAQHSSPASEPSVCTVAASTKDDGKADFSNYGAVVDVYAPGKDITSLKPGGSTDTLSGTSMASPHVCGLGAYLIGLGKQGGPGLCDTIKKMANDVIQSPGEGTTGKLIYNGSGK.

A signal peptide spans 1–20; the sequence is MGFITKAIPIVLAALSTVNG. Residues 21-126 constitute a propeptide that is removed on maturation; the sequence is ARILEAGPHA…VVRTTTNGTN (106 aa). In terms of domain architecture, Inhibitor I9 spans 36–120; that stretch reads KYIVVMKREV…FIEPDFVVRT (85 aa). N-linked (GlcNAc...) asparagine glycosylation is found at asparagine 123 and asparagine 126. The Peptidase S8 domain occupies 135-412; that stretch reads SWGLARVGSK…GKLIYNGSGK (278 aa). Residues aspartate 167 and histidine 198 each act as charge relay system in the active site. Residues asparagine 252 and asparagine 264 are each glycosylated (N-linked (GlcNAc...) asparagine). Serine 358 functions as the Charge relay system in the catalytic mechanism. N-linked (GlcNAc...) asparagine glycosylation is present at asparagine 408.

The protein belongs to the peptidase S8 family.

The protein resides in the secreted. In terms of biological role, secreted subtilisin-like serine protease with keratinolytic activity that contributes to pathogenicity. The protein is Subtilisin-like protease 6 (SUB6) of Trichophyton rubrum (Athlete's foot fungus).